Consider the following 151-residue polypeptide: MEAQLHAKPHAQGEWSTGFCDCFSDCRNCCITLCCPCITFGQVAEIVDRGSKSCCAAGALYMLIDLITSCGRMYACFYSGKMRAQYNIKGDGCTDCLKHFCCNLCALTQQYRELKHRGFDMSLGWAGNAEKQQNQGGVAMGAPAFQGGMTR.

The next 2 membrane-spanning stretches (helical) occupy residues 31 to 47 (ITLC…AEIV) and 54 to 71 (CCAA…TSCG).

It belongs to the cornifelin family. As to quaternary structure, homopentamer. As to expression, expressed in aerial part, but not in roots. Detected in the guard and mesophyll cells.

It is found in the cell membrane. Involved in glutathione-independent cadmium resistance. Reduces cadmium uptake rather than activating efflux, but is not closely coupled to calcium transporter. The chain is Protein PLANT CADMIUM RESISTANCE 1 (PCR1) from Arabidopsis thaliana (Mouse-ear cress).